We begin with the raw amino-acid sequence, 356 residues long: Glutamine synthetase nodule isozyme (356 aa).

The GS beta-grasp domain occupies 19–99 (IIAEYIWVGG…VICDVYTPAG (81 aa)). Residues 106-356 (KRHNAAKIFS…IAETTLLWKP (251 aa)) form the GS catalytic domain.

Belongs to the glutamine synthetase family. As to quaternary structure, homooctamer. Found at highest levels in root nodules.

The protein resides in the cytoplasm. It catalyses the reaction L-glutamate + NH4(+) + ATP = L-glutamine + ADP + phosphate + H(+). In Medicago sativa (Alfalfa), this protein is Glutamine synthetase nodule isozyme (GS1).